A 197-amino-acid polypeptide reads, in one-letter code: Xanthine phosphoribosyltransferase (197 aa).

Xanthine contacts are provided by Leu-20 and Asn-27. Position 128–132 (128–132) interacts with 5-phospho-alpha-D-ribose 1-diphosphate; that stretch reads ANGQA. Lys-156 serves as a coordination point for xanthine.

This sequence belongs to the purine/pyrimidine phosphoribosyltransferase family. Xpt subfamily. In terms of assembly, homodimer.

The protein resides in the cytoplasm. It carries out the reaction XMP + diphosphate = xanthine + 5-phospho-alpha-D-ribose 1-diphosphate. It functions in the pathway purine metabolism; XMP biosynthesis via salvage pathway; XMP from xanthine: step 1/1. Functionally, converts the preformed base xanthine, a product of nucleic acid breakdown, to xanthosine 5'-monophosphate (XMP), so it can be reused for RNA or DNA synthesis. This Bacillus cereus (strain ZK / E33L) protein is Xanthine phosphoribosyltransferase.